We begin with the raw amino-acid sequence, 204 residues long: Large ribosomal subunit protein eL15 (204 aa).

It belongs to the eukaryotic ribosomal protein eL15 family. As to quaternary structure, component of the large ribosomal subunit.

The protein resides in the cytoplasm. Functionally, component of the large ribosomal subunit. The ribosome is a large ribonucleoprotein complex responsible for the synthesis of proteins in the cell. The chain is Large ribosomal subunit protein eL15 (rpl15) from Silurus meridionalis (Southern catfish).